The sequence spans 338 residues: 5-dehydro-2-deoxygluconokinase (338 aa).

The protein belongs to the carbohydrate kinase PfkB family.

The enzyme catalyses 5-dehydro-2-deoxy-D-gluconate + ATP = 6-phospho-5-dehydro-2-deoxy-D-gluconate + ADP + H(+). Its pathway is polyol metabolism; myo-inositol degradation into acetyl-CoA; acetyl-CoA from myo-inositol: step 5/7. In terms of biological role, catalyzes the phosphorylation of 5-dehydro-2-deoxy-D-gluconate (2-deoxy-5-keto-D-gluconate or DKG) to 6-phospho-5-dehydro-2-deoxy-D-gluconate (DKGP). This Clostridium perfringens (strain ATCC 13124 / DSM 756 / JCM 1290 / NCIMB 6125 / NCTC 8237 / Type A) protein is 5-dehydro-2-deoxygluconokinase.